The chain runs to 125 residues: Interferon-induced transmembrane protein 1 (125 aa).

Residues 1–36 (MHKEEHEVAVLGPPPSTILPRSTVINIHSETSVPDH) lie on the Cytoplasmic side of the membrane. A Phosphoserine modification is found at Ser-16. The helical intramembrane region spans 37 to 57 (VVWSLFNTLFLNWCCLGFIAF). 3 S-palmitoyl cysteine lipidation sites follow: Cys-50, Cys-51, and Cys-84. Topologically, residues 58–86 (AYSVKSRDRKMVGDVTGAQAYASTAKCLN) are cytoplasmic. Residues 84-125 (CLNIWALILGILMTIGFILLLVFGSVTVYHIMLQIIQEKRGY) are interaction with CAV1. A helical membrane pass occupies residues 87–107 (IWALILGILMTIGFILLLVFG). Residues 108-125 (SVTVYHIMLQIIQEKRGY) lie on the Extracellular side of the membrane.

This sequence belongs to the CD225/Dispanin family. In terms of assembly, interacts with CD81. Part of a complex composed of CD19, CR2/CD21, CD81 and IFITM1/CD225 in the membrane of mature B-cells. Interacts with CAV1; this interaction enhances the ability of CAV1 in inhibiting ERK activation. Palmitoylation on membrane-proximal cysteines controls clustering in membrane compartments and antiviral activity. As to expression, bone (at protein level). Levels greatly elevated in colon cancer, cervical cancer, esophageal cancer and ovarian cancer. Expressed in glioma cell lines.

Its subcellular location is the cell membrane. It localises to the lysosome membrane. Functionally, IFN-induced antiviral protein which inhibits the entry of viruses to the host cell cytoplasm, permitting endocytosis, but preventing subsequent viral fusion and release of viral contents into the cytosol. Active against multiple viruses, including influenza A virus, SARS coronaviruses (SARS-CoV and SARS-CoV-2), Marburg virus (MARV), Ebola virus (EBOV), Dengue virus (DNV), West Nile virus (WNV), human immunodeficiency virus type 1 (HIV-1) and hepatitis C virus (HCV). Can inhibit: influenza virus hemagglutinin protein-mediated viral entry, MARV and EBOV GP1,2-mediated viral entry and SARS-CoV and SARS-CoV-2 S protein-mediated viral entry. Also implicated in cell adhesion and control of cell growth and migration. Inhibits SARS-CoV-2 S protein-mediated syncytia formation. Plays a key role in the antiproliferative action of IFN-gamma either by inhibiting the ERK activation or by arresting cell growth in G1 phase in a p53-dependent manner. Acts as a positive regulator of osteoblast differentiation. In hepatocytes, IFITM proteins act in a coordinated manner to restrict HCV infection by targeting the endocytosed HCV virion for lysosomal degradation. IFITM2 and IFITM3 display anti-HCV activity that may complement the anti-HCV activity of IFITM1 by inhibiting the late stages of HCV entry, possibly in a coordinated manner by trapping the virion in the endosomal pathway and targeting it for degradation at the lysosome. This Homo sapiens (Human) protein is Interferon-induced transmembrane protein 1.